Consider the following 231-residue polypeptide: MAKLTKRQKAIAEKIESGKQYAFEDAAKLLAEVSAVKFTESFDIAINLGVDPRKSDQVVRGATVLPNGTGKTVRVAVFTQGPGAEAALAAGADRVGMDDLAAEMKGGDLNYDVVIASPDAMRVVGQLGQVLGPRGLMPNPKVGTVTPDVATAVKNAKAGQVRFRTDKNGIIHTSVGKVGFDAAALKQNVEALLSDLKRLKPSTSKGIYVKRVTLSTTMGPGLVIDQASLEA.

Belongs to the universal ribosomal protein uL1 family. In terms of assembly, part of the 50S ribosomal subunit.

Functionally, binds directly to 23S rRNA. The L1 stalk is quite mobile in the ribosome, and is involved in E site tRNA release. In terms of biological role, protein L1 is also a translational repressor protein, it controls the translation of the L11 operon by binding to its mRNA. The chain is Large ribosomal subunit protein uL1 from Stutzerimonas stutzeri (strain A1501) (Pseudomonas stutzeri).